We begin with the raw amino-acid sequence, 101 residues long: MSNTQAERSIIGMIDMFHKYTRRDDKIEKPSLLTMMKENFPNFLSACDKKGTNYLADVFEKKDKNEDKKIDFSEFLSLLGDIATDYHKQSHGAAPCSGGSQ.

Ser2 carries the post-translational modification N-acetylserine. EF-hand domains are found at residues Met13–Asp48 and Lys50–Asp85. Residues His18 and Asp25 each coordinate Zn(2+). An intrachain disulfide couples Cys47 to Cys96. Residues Asp63, Asn65, Asp67, Lys69, and Glu74 each coordinate Ca(2+). Zn(2+) is bound by residues His87 and His91.

Interacts with RANBP9. In terms of tissue distribution, fetal ear, skin, and tongue and human cell lines. Highly up-regulated in psoriatic epidermis. Also highly expressed in the urine of bladder squamous cell carcinoma (SCC) bearing patients.

The protein resides in the cytoplasm. The protein localises to the secreted. This chain is Protein S100-A7 (S100A7), found in Homo sapiens (Human).